The following is a 138-amino-acid chain: uncharacterized protein (138 aa).

The disordered stretch occupies residues 89–138 (DDYEDDFEDSDFQDGDFDDFEDEDGFDDDDDFEDDDFEYEDEDNDLDFDE).

This is an uncharacterized protein from Treponema pallidum (strain Nichols).